The chain runs to 637 residues: Chaperone protein HtpG (637 aa).

The a; substrate-binding stretch occupies residues 1-345 (MSQQETHGFQ…SNDLPLNVSR (345 aa)). Residues 346 to 562 (EILQDNHITK…EGEMSSQMIK (217 aa)) are b. The segment at 563-637 (LMQAAGQPVP…MNQMLLANLK (75 aa)) is c.

This sequence belongs to the heat shock protein 90 family. Homodimer.

The protein localises to the cytoplasm. Molecular chaperone. Has ATPase activity. The protein is Chaperone protein HtpG of Shewanella sp. (strain ANA-3).